The chain runs to 100 residues: Urease subunit gamma (100 aa).

It belongs to the urease gamma subunit family. In terms of assembly, heterotrimer of UreA (gamma), UreB (beta) and UreC (alpha) subunits. Three heterotrimers associate to form the active enzyme.

The protein localises to the cytoplasm. It catalyses the reaction urea + 2 H2O + H(+) = hydrogencarbonate + 2 NH4(+). It participates in nitrogen metabolism; urea degradation; CO(2) and NH(3) from urea (urease route): step 1/1. This chain is Urease subunit gamma, found in Methylibium petroleiphilum (strain ATCC BAA-1232 / LMG 22953 / PM1).